Here is an 863-residue protein sequence, read N- to C-terminus: Axin-1 (863 aa).

The tract at residues 1–81 is disordered; the sequence is MNVQEQGFPL…PEGSASPTPP (81 aa). Positions 20-29 match the Tankyrase-binding motif motif; it reads APRPPVPGEE. The segment covering 34–61 has biased composition (polar residues); it reads STDSRPVNHSFCSGKGTSIKSETSTATP. The residue at position 75 (Ser75) is a Phosphoserine. Ser77 is modified (phosphoserine; by CK1). Positions 88–211 constitute an RGS domain; the sequence is SLHSLLDDQD…LKSDIYLEYT (124 aa). Positions 209–338 are interaction with TP53; the sequence is EYTRTGSESP…DADTLSLTDS (130 aa). Disordered stretches follow at residues 215–240, 249–268, and 315–344; these read SESPKVCSDQSSGSGTGKGMSGYLPT, CDQDADEDDGRDPLPPSRLT, and ATSANDSEQQSLSSDADTLSLTDSSVDGIP. Residue Ser217 is modified to Phosphoserine. Residues 249-258 are compositionally biased toward acidic residues; it reads CDQDADEDDG. Positions 325–339 are enriched in low complexity; the sequence is SLSSDADTLSLTDSS. Positions 348-432 are interaction with GSK3B; sequence IRKQHRREMQ…EDGEMPSGPM (85 aa). Residues 353–411 form an interaction with SIAH1 region; that stretch reads RREMQESIQVNGRVPLPHIPRTYRMPKEIRVEPQKFAEELIHRLEAVQRTREAEEKLEE. An interaction with beta-catenin region spans residues 433 to 501; the sequence is ASHKLPSVPA…SPDSGHVAKT (69 aa). Ser468 is subject to Phosphoserine; by CK1. The residue at position 480 (Thr480) is a Phosphothreonine; by GSK3-beta. Ser485 is modified (phosphoserine; by GSK3-beta). Ser492 and Ser509 each carry phosphoserine. The interval 505-758 is interaction with RNF111; it reads GGTASGHGKH…PVLSVVPAVS (254 aa). A compositionally biased stretch (basic residues) spans 529–542; that stretch reads HHRHVHHHVHHNSA. Disordered stretches follow at residues 529–624 and 642–664; these read HHRH…DAEK and HRKAGHGSSGLRKQQAHESSRPL. Positions 543-554 are enriched in basic and acidic residues; sequence RPKEQMEAEVAR. The interaction with PPP2CA stretch occupies residues 572 to 790; sequence PRSYSENAGT…CDSIVVAYYF (219 aa). Polar residues predominate over residues 575 to 584; sequence YSENAGTTLS. Residues 678–753 are interaction with HIPK2; the sequence is AQLRNSVQPS…RPACAPVLSV (76 aa). The DIX domain occupies 781-863; the sequence is CDSIVVAYYF…KIIGKVEKVD (83 aa). Residues Lys858 and Lys861 each participate in a glycyl lysine isopeptide (Lys-Gly) (interchain with G-Cter in SUMO) cross-link.

As to quaternary structure, homodimer. Component of the beta-catenin destruction complex, containing at least CTNNB1, an axin and GSK3B, that regulates CTNNB1 protein levels through phosphorylation and ubiquitination. Interacts with GSK3B; the interaction hyperphosphorylates CTNNB1 leading to its ubiquitination and destruction. Interacts with DAXX; the interaction stimulates the interaction of DAXX with TP53, stimulates 'Ser-46' phosphorylation of TP53 and induces cell death on UV irradiation. Also interacts with APC, RNF111, SMAD6 and SMAD7. Interacts (via the C-terminal) with PPP1CA; the interaction dephosphorylates AXIN1 and regulates interaction with GSK3B. Interacts with PPP2CA; the interaction dephosphorylates AXIN1. Interacts with MDFI; the interaction decreases AXIN1-mediated JUN N-terminal kinase (JNK) activation. Interacts with MDFIC; the interaction inhibits beta-cateninin-mediated signaling and AXIN1-mediated JUN N-terminal kinase (JNK) activation. Binds ANKRD6, PIAS1, PIAS2, PIAS4, SUMO1, MAP3K1 and MAP3K4. Component of the AXIN1-HIPK2-TP53 complex. Interacts directly in the complex with TP53 and HIPK2. Interacts with DIXDC1; the interaction prevents interaction with MAP3K1. Interacts with AIDA; the interaction blocks the AXIN1-mediated JNK activation through disrupting AXIN1 homodimerization and Wnt signaling. Interacts with LRP5 (via its phosphorylated PPPSP motifs); the interaction is stimulated by WNT1 and GSK3B and activates beta-catenin signaling. Interacts with CTNNB1 (via the armadillo repeats 2-7). Interacts with MACF1. Found in a complex composed of MACF1, APC, AXIN1, CTNNB1 and GSK3B. Interacts with TNKS. Interacts with DAB2; the interaction is mutually exclusive with the AXIN1:PPP1CA interaction. Interacts with ZBED3 (via PPPSP motif); the interaction is direct, enhanced by protein kinase GSK3B and casein kinase CSNK1E activities and decreases GSK3B-induced beta-catenin serine and threonine phosphorylations. Interacts with WDR26. Interacts with GID8. Interacts with SIAH1 and SIAH2; both probably catalyze AXIN1 ubiquitination and subsequent proteasome-mediated ubiquitin-dependent degradation. Interaction with GSK3B and AXIN1 is competitive. Post-translationally, phosphorylation and dephosphorylation of AXIN1 regulates assembly and function of the beta-catenin complex. Phosphorylated by CK1 and GSK3B. Dephosphorylated by PPP1CA and PPP2CA. Phosphorylation by CK1 enhances binding of GSK3B to AXIN1. Also phosphorylated by CDK2 which regulates interaction with CTNBB1. ADP-ribosylated by tankyrase TNKS and TNKS2. Poly-ADP-ribosylated protein is recognized by RNF146, followed by ubiquitination and subsequent activation of the Wnt signaling pathway. In terms of processing, ubiquitinated by RNF146 when poly-ADP-ribosylated, leading to its degradation and subsequent activation of the Wnt signaling pathway. Deubiquitinated by USP34, deubiquitinated downstream of beta-catenin stabilization step: deubiquitination is important for nuclear accumulation during Wnt signaling to positively regulate beta-catenin (CTNBB1)-mediated transcription. Sumoylation at Lys-858 and Lys-861 prevents ubiquitination and degradation. Sumoylation is required for AXIN1-mediated JNK activation. Ubiquitination by SIAH1 and SIAH2 induces its proteasomal degradation as part of the activation of the Wnt signaling pathway. Expressed in embryonic stem cells.

The protein resides in the cytoplasm. The protein localises to the nucleus. Its subcellular location is the cell membrane. It is found in the membrane. Its function is as follows. Component of the beta-catenin destruction complex required for regulating CTNNB1 levels through phosphorylation and ubiquitination, and modulating Wnt-signaling. Controls dorsoventral patterning via two opposing effects; down-regulates CTNNB1 to inhibit the Wnt signaling pathway and ventralize embryos, but also dorsalizes embryos by activating a Wnt-independent JNK signaling pathway. In Wnt signaling, probably facilitates the phosphorylation of CTNNB1 and APC by GSK3B. Likely to function as a tumor suppressor. Facilitates the phosphorylation of TP53 by HIPK2 upon ultraviolet irradiation. Enhances TGF-beta signaling by recruiting the RNF111 E3 ubiquitin ligase and promoting the degradation of inhibitory SMAD7. Also a component of the AXIN1-HIPK2-TP53 complex which controls cell growth, apoptosis and development. This chain is Axin-1 (Axin1), found in Mus musculus (Mouse).